The chain runs to 359 residues: Medium-wave-sensitive opsin 1 (359 aa).

Residues 1-47 (MAQQLTGEQTLDHYEDSTQASIFTYTNSNSTRGPFEGPNYHIAPRWV) lie on the Extracellular side of the membrane. Residues 12–38 (DHYEDSTQASIFTYTNSNSTRGPFEGP) form a required for 11-cis-retinal regeneration region. An N-linked (GlcNAc...) asparagine glycan is attached at N29. A helical membrane pass occupies residues 48–72 (YHLTSTWMILVVIASVFTNGLVLAA). Over 73–84 (TMRFKKLRHPLN) the chain is Cytoplasmic. The helical transmembrane segment at 85-110 (WILVNLAVADLAETIIASTISVVNQI) threads the bilayer. Topologically, residues 111–124 (YGYFVLGHPLCVIE) are extracellular. The cysteines at positions 121 and 198 are disulfide-linked. Residues 125–144 (GYIVSLCGITGLWSLAIISW) traverse the membrane as a helical segment. Residues 145 to 163 (ERWLVVCKPFGNVRFDAKL) are Cytoplasmic-facing. The helical transmembrane segment at 164–187 (ATVGIVFSWVWAAVWTAPPIFGWS) threads the bilayer. Residues 188–213 (RYWPYGLKTSCGPDVFSGTSYPGVQS) are Extracellular-facing. A helical transmembrane segment spans residues 214–241 (YMMVLMVTCCIFPLSIIVLCYLQVWLAI). Residues 242–263 (RAVAKQQKESESTQKAEKEVTR) are Cytoplasmic-facing. A helical transmembrane segment spans residues 264–287 (MVVVMVFAYCLCWGPYTFFACFAT). Residues 288 to 295 (AHPGYAFH) are Extracellular-facing. A helical transmembrane segment spans residues 296–320 (PLVASLPSYFAKSATIYNPIIYVFM). K307 is modified (N6-(retinylidene)lysine). Over 321–359 (NRQFRNCILQLFGKKVDDSSELSSTSKTEVSSVSSVSPA) the chain is Cytoplasmic.

The protein belongs to the G-protein coupled receptor 1 family. Opsin subfamily. As to quaternary structure, monomer. Homodimer. Homotetramer. In terms of processing, O-glycosylated. Post-translationally, phosphorylated on some or all of the serine and threonine residues present in the C-terminal region. Expressed in cone photoreceptor cells.

It is found in the membrane. Its function is as follows. Visual pigments are the light-absorbing molecules that mediate vision. They consist of an apoprotein, opsin, covalently linked to cis-retinal. May increase spectral sensitivity in dim light. This Rattus norvegicus (Rat) protein is Medium-wave-sensitive opsin 1 (Opn1mw).